Reading from the N-terminus, the 959-residue chain is Leucine--tRNA ligase (959 aa).

The 'HIGH' region motif lies at 39-49; that stretch reads PYVNAYPHLGS. The 'KMSKS' region motif lies at 637 to 641; the sequence is KMSKS. Lysine 640 is an ATP binding site. The tract at residues 933 to 959 is disordered; sequence TEEDGGSPRRANALPGRPALYAEKRGG.

It belongs to the class-I aminoacyl-tRNA synthetase family.

It localises to the cytoplasm. The enzyme catalyses tRNA(Leu) + L-leucine + ATP = L-leucyl-tRNA(Leu) + AMP + diphosphate. In Aeropyrum pernix (strain ATCC 700893 / DSM 11879 / JCM 9820 / NBRC 100138 / K1), this protein is Leucine--tRNA ligase.